Consider the following 79-residue polypeptide: U-actitoxin-Avd8a (79 aa).

Positions 1–19 (MKSLVIVFVVLLGVAMISA) are cleaved as a signal peptide. Positions 20 to 36 (NEEELLAILQDQRNDAR) are excised as a propeptide.

The protein belongs to the sea anemone 8 toxin family.

The protein localises to the secreted. The protein resides in the nematocyst. The chain is U-actitoxin-Avd8a from Anemonia viridis (Snakelocks anemone).